The sequence spans 104 residues: N(4)-acetylcytidine amidohydrolase (104 aa).

Positions 7–93 (MTFFSRFEAD…EVIQEIYPGI (87 aa)) constitute an ASCH domain. Lys-22 functions as the Proton acceptor in the catalytic mechanism. Thr-25 acts as the Nucleophile in catalysis. The active-site Proton donor is the Glu-75.

Belongs to the N(4)-acetylcytidine amidohydrolase family.

The catalysed reaction is N(4)-acetylcytidine + H2O = cytidine + acetate + H(+). It catalyses the reaction N(4)-acetyl-2'-deoxycytidine + H2O = 2'-deoxycytidine + acetate + H(+). The enzyme catalyses N(4)-acetylcytosine + H2O = cytosine + acetate + H(+). Functionally, catalyzes the hydrolysis of N(4)-acetylcytidine (ac4C). In Vibrio vulnificus (strain CMCP6), this protein is N(4)-acetylcytidine amidohydrolase.